The following is a 679-amino-acid chain: Glycine--tRNA ligase beta subunit (679 aa).

The protein belongs to the class-II aminoacyl-tRNA synthetase family. In terms of assembly, tetramer of two alpha and two beta subunits.

The protein resides in the cytoplasm. The enzyme catalyses tRNA(Gly) + glycine + ATP = glycyl-tRNA(Gly) + AMP + diphosphate. The sequence is that of Glycine--tRNA ligase beta subunit from Streptococcus equi subsp. zooepidemicus (strain H70).